The chain runs to 436 residues: tRNA(Ile)-lysidine synthase (436 aa).

27–32 (SGGVDS) is a binding site for ATP.

Belongs to the tRNA(Ile)-lysidine synthase family.

The protein localises to the cytoplasm. The enzyme catalyses cytidine(34) in tRNA(Ile2) + L-lysine + ATP = lysidine(34) in tRNA(Ile2) + AMP + diphosphate + H(+). Ligates lysine onto the cytidine present at position 34 of the AUA codon-specific tRNA(Ile) that contains the anticodon CAU, in an ATP-dependent manner. Cytidine is converted to lysidine, thus changing the amino acid specificity of the tRNA from methionine to isoleucine. The polypeptide is tRNA(Ile)-lysidine synthase (Vibrio vulnificus (strain CMCP6)).